The following is a 413-amino-acid chain: L-methionine gamma-lyase (413 aa).

Pyridoxal 5'-phosphate-binding positions include 75-77 and 105-106; these read YGR and GM. Residue tyrosine 131 coordinates substrate. Pyridoxal 5'-phosphate is bound at residue 218 to 220; it reads SAT. Position 221 is an N6-(pyridoxal phosphate)lysine (lysine 221). Position 365 (arginine 365) interacts with substrate. The disordered stretch occupies residues 388-413; that stretch reads RLPETAGAGREPSRTALRLPERAADR.

It belongs to the trans-sulfuration enzymes family. As to quaternary structure, homotetramer; dimer of active dimers. Pyridoxal 5'-phosphate serves as cofactor.

The catalysed reaction is L-methionine + H2O = methanethiol + 2-oxobutanoate + NH4(+). The enzyme catalyses L-homocysteine + H2O = 2-oxobutanoate + hydrogen sulfide + NH4(+) + H(+). It carries out the reaction L-cysteine + H2O = hydrogen sulfide + pyruvate + NH4(+) + H(+). Its function is as follows. Catalyzes the alpha,gamma-elimination of L-methionine to produce methanethiol, 2-oxobutanoate and ammonia. Is probably involved in L-methionine catabolism. Is also able to catalyze the alpha,gamma-elimination of L-homocysteine, and, to a lesser extent, the alpha,beta-elimination of L-cysteine. This is L-methionine gamma-lyase from Streptomyces avermitilis (strain ATCC 31267 / DSM 46492 / JCM 5070 / NBRC 14893 / NCIMB 12804 / NRRL 8165 / MA-4680).